Reading from the N-terminus, the 378-residue chain is Probable pectin lyase A (378 aa).

Residues 1–18 (MKYQDLLAIAGCIANAGA) form the signal peptide. 2 disulfide bridges follow: Cys-81–Cys-100 and Cys-90–Cys-224. Asn-127 carries an N-linked (GlcNAc...) asparagine glycan. Residue Arg-254 is part of the active site. Cysteines 321 and 329 form a disulfide.

It belongs to the polysaccharide lyase 1 family.

Its subcellular location is the secreted. The enzyme catalyses Eliminative cleavage of (1-&gt;4)-alpha-D-galacturonan methyl ester to give oligosaccharides with 4-deoxy-6-O-methyl-alpha-D-galact-4-enuronosyl groups at their non-reducing ends.. Its function is as follows. Pectinolytic enzymes consist of four classes of enzymes: pectin lyase, polygalacturonase, pectin methylesterase and rhamnogalacturonase. Among pectinolytic enzymes, pectin lyase is the most important in depolymerization of pectin, since it cleaves internal glycosidic bonds of highly methylated pectins. The chain is Probable pectin lyase A (pelA) from Aspergillus fumigatus (strain CBS 144.89 / FGSC A1163 / CEA10) (Neosartorya fumigata).